Reading from the N-terminus, the 247-residue chain is tRNA uridine(34) hydroxylase (247 aa).

The Rhodanese domain maps to 124–218 (TQQDVIVIDT…YLEDTQNKNN (95 aa)). Cys178 acts as the Cysteine persulfide intermediate in catalysis.

Belongs to the TrhO family.

The enzyme catalyses uridine(34) in tRNA + AH2 + O2 = 5-hydroxyuridine(34) in tRNA + A + H2O. Functionally, catalyzes oxygen-dependent 5-hydroxyuridine (ho5U) modification at position 34 in tRNAs. This chain is tRNA uridine(34) hydroxylase, found in Rickettsia conorii (strain ATCC VR-613 / Malish 7).